The primary structure comprises 341 residues: Phosphoribosylformylglycinamidine cyclo-ligase (341 aa).

This sequence belongs to the AIR synthase family.

The protein localises to the cytoplasm. The catalysed reaction is 2-formamido-N(1)-(5-O-phospho-beta-D-ribosyl)acetamidine + ATP = 5-amino-1-(5-phospho-beta-D-ribosyl)imidazole + ADP + phosphate + H(+). Its pathway is purine metabolism; IMP biosynthesis via de novo pathway; 5-amino-1-(5-phospho-D-ribosyl)imidazole from N(2)-formyl-N(1)-(5-phospho-D-ribosyl)glycinamide: step 2/2. This Thermosynechococcus vestitus (strain NIES-2133 / IAM M-273 / BP-1) protein is Phosphoribosylformylglycinamidine cyclo-ligase.